The sequence spans 347 residues: MDENKKRALAAALGQIEKQFGKGAVMRMGDHDRQAIPSISTGSLGLDIALGIGGLPKGRIVEIYGPESSGKTTLTLSVIAAAQRMGSTCAFVDAEHALDPDYAGKLGVNVDDLLVSQPDTGEQALEITDMLVRSNAVDVIIVDSVAALVPKAEIEGEMGDAHVGLQARLMSQALRKITGNIKNANCLVIFINQIRMKIGVMFGSPETTTGGNALKFYASVRLDIRRTGAVKEGDEVVGSETRVKVVKNKVAPPFRQAEFQILYDQAFYRNGEIIDLGVQQGLVEKSGAWYAYKGSKIGQGKANAAKYLEENPEIGQEIEQQIRAKLLVTSANTKATPVAEDLADADI.

65–72 lines the ATP pocket; the sequence is GPESSGKT.

It belongs to the RecA family.

The protein resides in the cytoplasm. Its function is as follows. Can catalyze the hydrolysis of ATP in the presence of single-stranded DNA, the ATP-dependent uptake of single-stranded DNA by duplex DNA, and the ATP-dependent hybridization of homologous single-stranded DNAs. It interacts with LexA causing its activation and leading to its autocatalytic cleavage. This chain is Protein RecA, found in Stutzerimonas stutzeri (Pseudomonas stutzeri).